The sequence spans 276 residues: Aurora kinase C (276 aa).

Positions 16–266 constitute a Protein kinase domain; that stretch reads FEIGRPLGRG…LAQVLKHPWV (251 aa). ATP is bound by residues 22-30 and lysine 45; that span reads LGRGKFGRV. Aspartate 139 acts as the Proton acceptor in catalysis. Threonine 171 carries the post-translational modification Phosphothreonine; by PKA.

Belongs to the protein kinase superfamily. Ser/Thr protein kinase family. Aurora subfamily. Component of the chromosomal passenger complex (CPC) composed of at least BIRC5/survivin, CDCA8/borealin, INCENP, AURKB or AURKC; predominantly independent AURKB- and AURKC-containing complexes exist; in the complex interacts directly with BIRC5/survivin and INCENP. Interacts with TACC1. As to expression, expressed only in testis.

The protein localises to the nucleus. The protein resides in the chromosome. Its subcellular location is the centromere. It is found in the cytoplasm. It localises to the cytoskeleton. The protein localises to the spindle. It catalyses the reaction L-seryl-[protein] + ATP = O-phospho-L-seryl-[protein] + ADP + H(+). The enzyme catalyses L-threonyl-[protein] + ATP = O-phospho-L-threonyl-[protein] + ADP + H(+). With respect to regulation, okadaic acid, an inhibitor of protein phosphatase 1 (PP1), protein phosphatase 2A (PP2A) and protein phosphatase 5 (PP5), increases AURKC activity. AURKC is also stabilized through its interaction with INCENP, which also acts as an activator. Functionally, serine/threonine-protein kinase component of the chromosomal passenger complex (CPC), a complex that acts as a key regulator of mitosis. The CPC complex has essential functions at the centromere in ensuring correct chromosome alignment and segregation and is required for chromatin-induced microtubule stabilization and spindle assembly. Also plays a role in meiosis and more particularly in spermatogenesis. Has redundant cellular functions with AURKB and can rescue an AURKB knockdown. Like AURKB, AURKC phosphorylates histone H3 at 'Ser-10' and 'Ser-28'. AURKC phosphorylates the CPC complex subunits BIRC5/survivin and INCENP leading to increased AURKC activity. Phosphorylates TACC1, another protein involved in cell division, at 'Ser-228'. This chain is Aurora kinase C (Aurkc), found in Mus musculus (Mouse).